The chain runs to 341 residues: DER1-like family member protein 1 (341 aa).

At 1 to 41 the chain is on the cytoplasmic side; the sequence is MAGPRNVRTLHGNGGRNNDVMGPKEFWLNIPPITRTLFTLA. Residues 42–62 form a helical membrane-spanning segment; that stretch reads IVMTIVGRLNLINPWYFIYVW. Residues 63–122 lie on the Lumenal side of the membrane; sequence NLTFKKVQIWRLLTSCVMLSSRAMPALMELYSIYDRSSQLERGHFGPGLSNRRGPMVTVD. The chain crosses the membrane as a helical span at residues 123 to 143; that stretch reads YAYYLCFCILAITTATTIIYG. Residues 144-170 are Cytoplasmic-facing; it reads SYYPVVLTSGFISCITYTWSIDNANVQ. Residues 171 to 191 traverse the membrane as a helical segment; sequence IMFYGLIPVWGKYFPLIQLFI. Ser-192 is a topological domain (lumenal). The chain crosses the membrane as a helical span at residues 193–213; sequence FVFNEGDFVISLIGFTTGYLY. Residues 214–341 lie on the Cytoplasmic side of the membrane; the sequence is TCLDTHTLGP…GQTNSPSDSQ (128 aa). Polar residues-rich tracts occupy residues 276-286 and 296-341; these read SSQRETRTFSG and ATLS…SDSQ. The segment at 276 to 341 is disordered; it reads SSQRETRTFS…GQTNSPSDSQ (66 aa).

It belongs to the derlin family.

It is found in the endoplasmic reticulum membrane. Functionally, may be involved in the degradation process of some misfolded endoplasmic reticulum (ER) luminal proteins. Its precise role is however unclear and its inability to complement der1 mutations, suggests either that it is not involved in degradation process of misfolded proteins, or that it participates in the destruction of specific misfolded ER luminal proteins. This Saccharomyces cerevisiae (strain ATCC 204508 / S288c) (Baker's yeast) protein is DER1-like family member protein 1 (DFM1).